Here is a 209-residue protein sequence, read N- to C-terminus: Ribosomal RNA large subunit methyltransferase E (209 aa).

S-adenosyl-L-methionine contacts are provided by Gly63, Trp65, Asp83, Asp99, and Asp124. Lys164 functions as the Proton acceptor in the catalytic mechanism.

This sequence belongs to the class I-like SAM-binding methyltransferase superfamily. RNA methyltransferase RlmE family.

The protein localises to the cytoplasm. The catalysed reaction is uridine(2552) in 23S rRNA + S-adenosyl-L-methionine = 2'-O-methyluridine(2552) in 23S rRNA + S-adenosyl-L-homocysteine + H(+). Its function is as follows. Specifically methylates the uridine in position 2552 of 23S rRNA at the 2'-O position of the ribose in the fully assembled 50S ribosomal subunit. This Shewanella amazonensis (strain ATCC BAA-1098 / SB2B) protein is Ribosomal RNA large subunit methyltransferase E.